The chain runs to 307 residues: D-alanine--D-alanine ligase (307 aa).

The ATP-grasp domain occupies 101–301; the sequence is KDVLRAAGVP…FGELVRWMVE (201 aa). 128-182 lines the ATP pocket; sequence MTPPYVVKPLGEGSSFGVIIVRADQTHPPQELTRDDWAYGDLVLVERFVAGRELT. Positions 251, 268, and 270 each coordinate Mg(2+).

It belongs to the D-alanine--D-alanine ligase family. The cofactor is Mg(2+). Requires Mn(2+) as cofactor.

The protein localises to the cytoplasm. The enzyme catalyses 2 D-alanine + ATP = D-alanyl-D-alanine + ADP + phosphate + H(+). It functions in the pathway cell wall biogenesis; peptidoglycan biosynthesis. In terms of biological role, cell wall formation. This Methylocella silvestris (strain DSM 15510 / CIP 108128 / LMG 27833 / NCIMB 13906 / BL2) protein is D-alanine--D-alanine ligase.